A 105-amino-acid polypeptide reads, in one-letter code: uncharacterized protein (105 aa).

This is an uncharacterized protein from Escherichia coli (Bacteriophage T4).